The chain runs to 253 residues: 3-deoxy-manno-octulosonate cytidylyltransferase (253 aa).

It belongs to the KdsB family.

It localises to the cytoplasm. It catalyses the reaction 3-deoxy-alpha-D-manno-oct-2-ulosonate + CTP = CMP-3-deoxy-beta-D-manno-octulosonate + diphosphate. The protein operates within nucleotide-sugar biosynthesis; CMP-3-deoxy-D-manno-octulosonate biosynthesis; CMP-3-deoxy-D-manno-octulosonate from 3-deoxy-D-manno-octulosonate and CTP: step 1/1. It participates in bacterial outer membrane biogenesis; lipopolysaccharide biosynthesis. In terms of biological role, activates KDO (a required 8-carbon sugar) for incorporation into bacterial lipopolysaccharide in Gram-negative bacteria. This is 3-deoxy-manno-octulosonate cytidylyltransferase from Neisseria meningitidis serogroup B (strain ATCC BAA-335 / MC58).